Here is a 214-residue protein sequence, read N- to C-terminus: Peptide methionine sulfoxide reductase B1, chloroplastic (214 aa).

The transit peptide at 1–53 (MAMRQYAAATAASSSFRARPRARPSCLPAAALPLAPCCGVAWSRASYRRASVR) directs the protein to the chloroplast. Low complexity predominate over residues 58-81 (ASSSSSSSSSSPSPQGQAQAQAQG). A disordered region spans residues 58-91 (ASSSSSSSSSSPSPQGQAQAQAQGKPNYSTSLTD). A MsrB domain is found at 91 to 213 (DEEWRKRLTK…NSASLKLKKT (123 aa)). 4 residues coordinate Zn(2+): Cys-130, Cys-133, Cys-179, and Cys-182. Residue Cys-202 is the Nucleophile of the active site.

Belongs to the MsrB Met sulfoxide reductase family. Requires Zn(2+) as cofactor. Expressed in leaves and flowers.

The protein localises to the plastid. The protein resides in the chloroplast. The enzyme catalyses L-methionyl-[protein] + [thioredoxin]-disulfide + H2O = L-methionyl-(R)-S-oxide-[protein] + [thioredoxin]-dithiol. Its function is as follows. Catalyzes the reduction of methionine sulfoxide (MetSO) to methionine in proteins. Involved in abiotic stress response. Plays a protective role against oxidative stress by restoring activity to proteins that have been inactivated by methionine oxidation. MSRB family specifically reduces the MetSO R-enantiomer. The sequence is that of Peptide methionine sulfoxide reductase B1, chloroplastic from Oryza sativa subsp. japonica (Rice).